A 423-amino-acid chain; its full sequence is Hypoxia responsive morphology factor B (423 aa).

A Bipartite nuclear localization signal motif is present at residues 46-69; that stretch reads KRSKTRRPKKEYKLQYENTKAHRV. The tract at residues 157–187 is RNA recognition motif (RRM)-like domain; that stretch reads TQNCWAYRAAYLNAVHTIFSEQICSAMEVSP. The span at 243–257 shows a compositional bias: polar residues; that stretch reads LSPQSGRGPEPSTQI. A disordered region spans residues 243 to 273; it reads LSPQSGRGPEPSTQIAEPGRHDSQSEQSTIS.

It belongs to the hrmA family.

Its subcellular location is the nucleus. Functionally, probably modulates the generation of the hypoxia-typic morphotype (called H-MORPH) with altered biofilm architecture that leads to increased host inflammation, rapid disease progression, and mortality in a murine model of invasive aspergillosis. This Aspergillus fumigatus (strain CBS 144.89 / FGSC A1163 / CEA10) (Neosartorya fumigata) protein is Hypoxia responsive morphology factor B.